Consider the following 1328-residue polypeptide: WASH complex subunit 2 (1328 aa).

The tract at residues Met1–Asp219 is sufficient for interaction with WASHC3, WASHC4 and WASHC5; required for interaction with WASHC1. 5 positions are modified to phosphoserine: Ser157, Ser159, Ser204, Ser205, and Ser209. The segment covering Gly201 to Asp213 has biased composition (low complexity). Disordered stretches follow at residues Gly201–Leu655 and Lys675–Thr830. 2 stretches are compositionally biased toward acidic residues: residues Asp219–Asp231 and Ser248–Glu273. A Phosphoserine modification is found at Ser283. Residues Leu288–Ala323 are compositionally biased toward basic and acidic residues. Thr321 is modified (phosphothreonine). The interval Ser346–Gln592 is sufficient for interaction with CCDC93. The interaction with VPS35 stretch occupies residues Arg347 to Gln1328. Positions Leu357–Phe367 match the LFa 1 motif. A phosphoserine mark is found at Ser384 and Ser387. 2 consecutive short sequence motifs (LFa) follow at residues Leu440–Phe455 and Ile474–Phe483. Over residues Phe441–Asn453 the composition is skewed to acidic residues. A compositionally biased stretch (polar residues) spans Thr508–Gly528. Short sequence motifs (LFa) lie at residues Leu529–Phe540 and Leu564–Phe575. Phosphoserine is present on residues Ser531 and Ser536. Over residues Leu539–Ser556 the composition is skewed to low complexity. The segment covering Lys582–Gln592 has biased composition (polar residues). Phosphoserine occurs at positions 610 and 611. The segment covering Ala627–Asp638 has biased composition (basic and acidic residues). 2 short sequence motifs (LFa) span residues Leu655 to Phe667 and Leu683 to Phe695. Over residues Ser690–Pro699 the composition is skewed to polar residues. A phosphoserine mark is found at Ser720, Ser744, Ser749, Ser780, and Ser795. Residues Phe797 to Ser808 show a composition bias toward acidic residues. Short sequence motifs (LFa) lie at residues Val832–Phe840 and Asp849–Phe855. Disordered stretches follow at residues Leu863–Ser940 and Pro991–Val1088. A phosphoserine mark is found at Ser867 and Ser870. The short motif at Leu871–Phe881 is the LFa 10 element. Positions Pro894–Trp919 are enriched in basic and acidic residues. The segment at Gln925–Gln1328 is interaction with phospholipids. Over residues Asn1016 to Arg1034 the composition is skewed to basic residues. Residues Lys1017–Arg1035 form a required for interaction with F-actin-capping protein subunit alpha (CAPZA1 or CAPZA2 or CAPZA3) region. Ser1042, Ser1060, Ser1077, and Ser1102 each carry phosphoserine. Residues Ala1115–His1210 form a disordered region. 3 short sequence motifs (LFa) span residues Leu1117 to Phe1124, Val1157 to Phe1171, and Leu1187 to Phe1195. Residues Ser1162 and Ser1165 each carry the phosphoserine modification. The span at Ala1196–His1210 shows a compositional bias: basic and acidic residues. Short sequence motifs (LFa) lie at residues Ile1220–Phe1226, Leu1249–Phe1257, and Met1277–Phe1286. A disordered region spans residues Gly1289–Ser1310. Residues Ile1317–Phe1325 carry the LFa 17 motif. Ser1327 is subject to Phosphoserine.

The protein belongs to the FAM21 family. Component of the WASH core complex also described as WASH regulatory complex (SHRC) composed of WASHC1, WASHC2, WASHC3, WASHC4 and WASHC5; in the complex interacts (via N-terminus) directly with WASHC1. The WASH core complex associates with the F-actin-capping protein dimer (formed by CAPZA1, CAPZA2 or CAPZA3 and CAPZB) in a transient or substoichiometric manner which was initially described as WASH complex. Interacts with VPS35; mediates the association with the retromer CSC complex. Interacts with FKBP15. Interacts with CCDC93, CCDC22, VPS35L; indicative for an association of the WASH core complex with the CCC and retriever complexes. Directly interacts with TBC1D23.

It localises to the early endosome membrane. Its subcellular location is the cell membrane. Acts as a component of the WASH core complex that functions as a nucleation-promoting factor (NPF) at the surface of endosomes, where it recruits and activates the Arp2/3 complex to induce actin polymerization, playing a key role in the fission of tubules that serve as transport intermediates during endosome sorting. Mediates the recruitment of the WASH core complex to endosome membranes via binding to phospholipids and VPS35 of the retromer CSC. Mediates the recruitment of the F-actin-capping protein dimer to the WASH core complex probably promoting localized F-actin polymerization needed for vesicle scission. Via its C-terminus binds various phospholipids, most strongly phosphatidylinositol 4-phosphate (PtdIns-(4)P), phosphatidylinositol 5-phosphate (PtdIns-(5)P) and phosphatidylinositol 3,5-bisphosphate (PtdIns-(3,5)P2). Involved in the endosome-to-plasma membrane trafficking and recycling of SNX27-retromer-dependent cargo proteins, such as GLUT1. Required for the association of DNAJC13, ENTR1, ANKRD50 with retromer CSC subunit VPS35. Required for the endosomal recruitment of CCC and retriever complexes subunits COMMD1 and CCDC93 as well as the retrievere complex subunit VPS35L. The polypeptide is WASH complex subunit 2 (Rattus norvegicus (Rat)).